The sequence spans 470 residues: ATP synthase subunit beta (470 aa).

157–164 (GGAGVGKT) is an ATP binding site.

The protein belongs to the ATPase alpha/beta chains family. In terms of assembly, F-type ATPases have 2 components, CF(1) - the catalytic core - and CF(0) - the membrane proton channel. CF(1) has five subunits: alpha(3), beta(3), gamma(1), delta(1), epsilon(1). CF(0) has three main subunits: a(1), b(2) and c(9-12). The alpha and beta chains form an alternating ring which encloses part of the gamma chain. CF(1) is attached to CF(0) by a central stalk formed by the gamma and epsilon chains, while a peripheral stalk is formed by the delta and b chains.

The protein localises to the cell membrane. It catalyses the reaction ATP + H2O + 4 H(+)(in) = ADP + phosphate + 5 H(+)(out). Its function is as follows. Produces ATP from ADP in the presence of a proton gradient across the membrane. The catalytic sites are hosted primarily by the beta subunits. The polypeptide is ATP synthase subunit beta (Pelotomaculum thermopropionicum (strain DSM 13744 / JCM 10971 / SI)).